The primary structure comprises 304 residues: Ribosomal RNA small subunit methyltransferase H (304 aa).

S-adenosyl-L-methionine contacts are provided by residues 37-39 (AGH), Asp57, Phe79, Asp100, and His107.

This sequence belongs to the methyltransferase superfamily. RsmH family.

Its subcellular location is the cytoplasm. It carries out the reaction cytidine(1402) in 16S rRNA + S-adenosyl-L-methionine = N(4)-methylcytidine(1402) in 16S rRNA + S-adenosyl-L-homocysteine + H(+). Specifically methylates the N4 position of cytidine in position 1402 (C1402) of 16S rRNA. This Bacteroides thetaiotaomicron (strain ATCC 29148 / DSM 2079 / JCM 5827 / CCUG 10774 / NCTC 10582 / VPI-5482 / E50) protein is Ribosomal RNA small subunit methyltransferase H.